The sequence spans 43 residues: Protein PsbN (43 aa).

The chain crosses the membrane as a helical span at residues 7 to 29; sequence LSIALAAVCIGVTGYSIYLSFGP.

Belongs to the PsbN family.

It is found in the cellular thylakoid membrane. In terms of biological role, may play a role in photosystem I and II biogenesis. In Thermosynechococcus vestitus (strain NIES-2133 / IAM M-273 / BP-1), this protein is Protein PsbN.